A 328-amino-acid chain; its full sequence is MSQATAKVNREVQAFLQDLKGKTIDHVFFVACGGSSAIMYPSKYVFDRESKSINSDLYSANEFIQRNPVQLGEKSLVILCSHSGNTPETVKAAAFARGKGALTIAMTFKPESPLAQEAQYVAQYDWGDEALAINTNYGVLYQIVFGTLQVLENNTKFEQAIEGLDQLQAVYEKALKQEADNAKQFAKAHEKESIIYTMASGANYGVAYSYSICILMEMQWIHSHAIHAGEYFHGPFEIIDESVPFIILLGLDETRPLEERALTFSKKYGKKLTVLDAASYDFTAIDDSVKGYLAPLVLNRVLRSYADELAEERNHPLSHRRYMWKVEY.

2 consecutive SIS domains span residues 15–153 (FLQD…VLEN) and 181–311 (NAKQ…ELAE).

In terms of assembly, homooctamer.

In terms of biological role, catalyzes the conversion of a range of fructosamine 6-phosphates to glucose 6-phosphate and a free amino acid. The chain is Fructosamine deglycase FrlB (frlB) from Bacillus subtilis (strain 168).